The chain runs to 114 residues: Small ribosomal subunit protein bS16 (114 aa).

The protein belongs to the bacterial ribosomal protein bS16 family.

This Prochlorococcus marinus subsp. pastoris (strain CCMP1986 / NIES-2087 / MED4) protein is Small ribosomal subunit protein bS16.